Here is a 315-residue protein sequence, read N- to C-terminus: Ribosomal RNA small subunit methyltransferase H (315 aa).

S-adenosyl-L-methionine-binding positions include glycine 36–histidine 38, aspartate 56, phenylalanine 81, aspartate 103, and glutamine 110.

The protein belongs to the methyltransferase superfamily. RsmH family.

Its subcellular location is the cytoplasm. The enzyme catalyses cytidine(1402) in 16S rRNA + S-adenosyl-L-methionine = N(4)-methylcytidine(1402) in 16S rRNA + S-adenosyl-L-homocysteine + H(+). Functionally, specifically methylates the N4 position of cytidine in position 1402 (C1402) of 16S rRNA. This Idiomarina loihiensis (strain ATCC BAA-735 / DSM 15497 / L2-TR) protein is Ribosomal RNA small subunit methyltransferase H.